A 534-amino-acid chain; its full sequence is Probable glycine dehydrogenase (decarboxylating) subunit 2 (534 aa).

An N6-(pyridoxal phosphate)lysine modification is found at Lys-273.

The protein belongs to the GcvP family. C-terminal subunit subfamily. The glycine cleavage system is composed of four proteins: P, T, L and H. In this organism, the P 'protein' is a heterodimer of two subunits. The cofactor is pyridoxal 5'-phosphate.

It carries out the reaction N(6)-[(R)-lipoyl]-L-lysyl-[glycine-cleavage complex H protein] + glycine + H(+) = N(6)-[(R)-S(8)-aminomethyldihydrolipoyl]-L-lysyl-[glycine-cleavage complex H protein] + CO2. Functionally, the glycine cleavage system catalyzes the degradation of glycine. The P protein binds the alpha-amino group of glycine through its pyridoxal phosphate cofactor; CO(2) is released and the remaining methylamine moiety is then transferred to the lipoamide cofactor of the H protein. In Bacillus cereus (strain ATCC 14579 / DSM 31 / CCUG 7414 / JCM 2152 / NBRC 15305 / NCIMB 9373 / NCTC 2599 / NRRL B-3711), this protein is Probable glycine dehydrogenase (decarboxylating) subunit 2.